Here is a 228-residue protein sequence, read N- to C-terminus: DNA mismatch repair protein MutH (228 aa).

It belongs to the MutH family.

The protein resides in the cytoplasm. Its function is as follows. Sequence-specific endonuclease that cleaves unmethylated GATC sequences. It is involved in DNA mismatch repair. This chain is DNA mismatch repair protein MutH, found in Yersinia enterocolitica serotype O:8 / biotype 1B (strain NCTC 13174 / 8081).